A 277-amino-acid polypeptide reads, in one-letter code: Carbonyl reductase [NADPH] 1 (277 aa).

NADP(+) is bound by residues 10–34 (VTGANKGVGFAITRALCRLFSGDVL), 63–64 (DI), and N90. S30 carries the post-translational modification Phosphoserine. Residues 95–97 (FKM) and Q106 each bind glutathione. S140 is a binding site for substrate. 193–194 (AY) provides a ligand contact to glutathione. The active-site Proton acceptor is Y194. NADP(+) contacts are provided by residues 194 to 198 (YGVTK) and 231 to 233 (VRT).

The protein belongs to the short-chain dehydrogenases/reductases (SDR) family. In terms of assembly, monomer. As to expression, present in liver and kidney.

Its subcellular location is the cytoplasm. The catalysed reaction is a secondary alcohol + NADP(+) = a ketone + NADPH + H(+). It carries out the reaction prostaglandin F2alpha + NADP(+) = prostaglandin E2 + NADPH + H(+). It catalyses the reaction prostaglandin E1 + NADP(+) = 15-oxoprostaglandin E1 + NADPH + H(+). The enzyme catalyses menadione + NADPH + H(+) = menadiol + NADP(+). The catalysed reaction is prostaglandin D2 + NADP(+) = 15-oxoprostaglandin D2 + NADPH + H(+). It carries out the reaction prostaglandin E2 + NADP(+) = 15-oxoprostaglandin E2 + NADPH + H(+). It catalyses the reaction prostaglandin F2alpha + NADP(+) = 15-oxoprostaglandin F2alpha + NADPH + H(+). The enzyme catalyses daunorubicin + NADPH + H(+) = 13-dihydrodaunorubicin + NADP(+). The catalysed reaction is S-nitrosoglutathione + NADPH + H(+) = S-(hydroxysulfenamide)glutathione + NADP(+). It carries out the reaction a primary alcohol + NADP(+) = an aldehyde + NADPH + H(+). It catalyses the reaction cortisol + NADPH + H(+) = 20beta-dihydrocortisol + NADP(+). The enzyme catalyses corticosterone + NADPH + H(+) = 20beta-dihydrocorticosterone + NADP(+). Its function is as follows. NADPH-dependent reductase with broad substrate specificity. Catalyzes the reduction of a wide variety of carbonyl compounds including quinones, prostaglandins, menadione, plus various xenobiotics. Catalyzes the reduction of the antitumor anthracyclines doxorubicin and daunorubicin to the cardiotoxic compounds doxorubicinol and daunorubicinol. Can convert prostaglandin E to prostaglandin F2-alpha. Can bind glutathione, which explains its higher affinity for glutathione-conjugated substrates. Catalyzes the reduction of S-nitrosoglutathione. In addition, participates in the glucocorticoid metabolism by catalyzing the NADPH-dependent cortisol/corticosterone into 20beta-dihydrocortisol (20b-DHF) or 20beta-corticosterone (20b-DHB), which are weak agonists of NR3C1 and NR3C2 in adipose tissue. This is Carbonyl reductase [NADPH] 1 from Oryctolagus cuniculus (Rabbit).